We begin with the raw amino-acid sequence, 134 residues long: Large ribosomal subunit protein bL17 (134 aa).

It belongs to the bacterial ribosomal protein bL17 family. As to quaternary structure, part of the 50S ribosomal subunit. Contacts protein L32.

The protein is Large ribosomal subunit protein bL17 of Colwellia psychrerythraea (strain 34H / ATCC BAA-681) (Vibrio psychroerythus).